Reading from the N-terminus, the 256-residue chain is Thiazole synthase (256 aa).

Lys95 functions as the Schiff-base intermediate with DXP in the catalytic mechanism. Residues Gly156, 182–183 (AG), and 204–205 (NT) each bind 1-deoxy-D-xylulose 5-phosphate.

It belongs to the ThiG family. As to quaternary structure, homotetramer. Forms heterodimers with either ThiH or ThiS.

The protein resides in the cytoplasm. It carries out the reaction [ThiS sulfur-carrier protein]-C-terminal-Gly-aminoethanethioate + 2-iminoacetate + 1-deoxy-D-xylulose 5-phosphate = [ThiS sulfur-carrier protein]-C-terminal Gly-Gly + 2-[(2R,5Z)-2-carboxy-4-methylthiazol-5(2H)-ylidene]ethyl phosphate + 2 H2O + H(+). The protein operates within cofactor biosynthesis; thiamine diphosphate biosynthesis. Its function is as follows. Catalyzes the rearrangement of 1-deoxy-D-xylulose 5-phosphate (DXP) to produce the thiazole phosphate moiety of thiamine. Sulfur is provided by the thiocarboxylate moiety of the carrier protein ThiS. In vitro, sulfur can be provided by H(2)S. This is Thiazole synthase from Shigella flexneri.